The following is a 422-amino-acid chain: Charged multivesicular body protein 7 (422 aa).

The stretch at 234–304 (KLLSERLQSA…ERISAAETDR (71 aa)) forms a coiled coil. The segment at 394-422 (RPTEWKMDQAAHSPADGSFLRSVPEPMLQ) is disordered.

It belongs to the SNF7 family.

Its subcellular location is the cytoplasm. It localises to the nucleus envelope. In terms of biological role, ESCRT-III-like protein required to recruit the ESCRT-III complex to the nuclear envelope during late anaphase. Together with SPAST, the ESCRT-III complex promotes nuclear envelope sealing and mitotic spindle disassembly during late anaphase. Plays a role in the endosomal sorting pathway. This chain is Charged multivesicular body protein 7 (chmp7), found in Xenopus laevis (African clawed frog).